The sequence spans 406 residues: Uronyl 2-sulfotransferase (406 aa).

The Cytoplasmic segment spans residues 1–49 (MKKKQQHPGGGADPWPHGAPMGGAPPGLGSWKRRVPLLPFLRFSLRDYG). The chain crosses the membrane as a helical; Signal-anchor for type II membrane protein span at residues 50–70 (FCMATLLVFCLGSLLYQLSGG). The Lumenal segment spans residues 71–406 (PPRFLLDLRQ…EKWLEDIYKR (336 aa)). N-linked (GlcNAc...) asparagine glycans are attached at residues Asn84, Asn140, and Asn155. The active site involves His168. Residues Asn173 and Asn319 are each glycosylated (N-linked (GlcNAc...) asparagine). Acidic residues predominate over residues 387-399 (EPIDDEEQDDEKW). Positions 387–406 (EPIDDEEQDDEKWLEDIYKR) are disordered.

It belongs to the sulfotransferase 3 family. In terms of tissue distribution, widely expressed.

The protein localises to the golgi apparatus membrane. Sulfotransferase that catalyzes the transfer of sulfate to the position 2 of uronyl residues in glycosaminoglycan chains. Has mainly activity toward iduronyl residues in dermatan sulfate, and weaker activity toward glucuronyl residues of chondroitin sulfate. Has little to no activity toward desulfated N-resulfated heparin or N-sulfoheparosan. The sequence is that of Uronyl 2-sulfotransferase from Homo sapiens (Human).